The following is a 243-amino-acid chain: Mannosyl-3-phosphoglycerate phosphatase (243 aa).

Asp8 (nucleophile) is an active-site residue. The Mg(2+) site is built by Asp8, Asp10, Ser169, and Asp204.

Belongs to the HAD-like hydrolase superfamily. MPGP family. Mg(2+) is required as a cofactor.

It is found in the cytoplasm. It catalyses the reaction 2-O-(alpha-D-mannosyl)-3-phosphoglycerate + H2O = (2R)-2-O-(alpha-D-mannosyl)-glycerate + phosphate. It functions in the pathway carbohydrate biosynthesis; 2-(alpha-D-mannosyl)-D-glycerate biosynthesis; 2-(alpha-D-mannosyl)-D-glycerate from GDP-alpha-D-mannose (MPG route): step 2/2. In terms of biological role, hydrolyzes mannosyl-3-phosphoglycerate (MPG) to form the osmolyte mannosylglycerate (MG). The enzyme is absolutely specific for MPG. The sequence is that of Mannosyl-3-phosphoglycerate phosphatase from Pyrococcus horikoshii (strain ATCC 700860 / DSM 12428 / JCM 9974 / NBRC 100139 / OT-3).